A 1569-amino-acid polypeptide reads, in one-letter code: Zinc finger protein GLI3 (1569 aa).

Polar residues-rich tracts occupy residues 1–10 (MEAQSRSTTA) and 416–432 (AAQQ…SSTG). Disordered regions lie at residues 1-79 (MEAQ…STSS) and 414-461 (SEAA…DQPD). 5 consecutive C2H2-type zinc fingers follow at residues 485 to 510 (TNCH…NNDH), 518 to 545 (FVCR…MRRH), 551 to 575 (HKCT…LRSH), 581 to 606 (YVCE…NRTH), and 612 to 637 (YVCK…KTVH). 4 disordered regions span residues 625 to 731 (DPSS…YTNS), 899 to 921 (SYDP…DGLP), 1202 to 1228 (PKSG…QNLD), and 1335 to 1364 (SNQT…GEQQ). The span at 637–653 (HGPEAHVTKKQRGDIHP) shows a compositional bias: basic and acidic residues. Over residues 663 to 676 (SHSQSRSPGQQTQG) the composition is skewed to polar residues. Residues 678–704 (HGEHKDLSNTTSKHEECLQVRSVKTEK) show a composition bias toward basic and acidic residues. A compositionally biased stretch (polar residues) spans 705-731 (PMSSQPSPGGKSSCSRQQSPISNYTNS). The segment covering 1335–1350 (SNQTTSGQNGNTTDGT) has biased composition (low complexity). The segment covering 1352–1364 (SFLSTTQNGGEQQ) has biased composition (polar residues).

This sequence belongs to the GLI C2H2-type zinc-finger protein family. In terms of processing, phosphorylation is essential for its proteolytic processing. The repressor form (GLI3R), a C-terminally truncated form is generated from the full-length GLI3 protein (GLI3FL) through proteolytic processing.

Its subcellular location is the nucleus. It localises to the cytoplasm. Its function is as follows. Has a dual function as a transcriptional activator and a repressor of the sonic hedgehog (Shh) pathway, and may play a role in limb development. May bind to the minimal GLI-consensus sequence 5'-GGGTGGTC-3'. Has an essential role in the early embryonic patterning of mesoderm and neuroectoderm. The polypeptide is Zinc finger protein GLI3 (gli3) (Xenopus laevis (African clawed frog)).